Consider the following 208-residue polypeptide: Uracil phosphoribosyltransferase (208 aa).

5-phospho-alpha-D-ribose 1-diphosphate-binding positions include Arg-78, Arg-103, and 130–138 (DPMLATGGS). Residues Ile-193 and 198–200 (GDA) each bind uracil. Position 199 (Asp-199) interacts with 5-phospho-alpha-D-ribose 1-diphosphate.

The protein belongs to the UPRTase family. Mg(2+) is required as a cofactor.

The enzyme catalyses UMP + diphosphate = 5-phospho-alpha-D-ribose 1-diphosphate + uracil. It participates in pyrimidine metabolism; UMP biosynthesis via salvage pathway; UMP from uracil: step 1/1. Its activity is regulated as follows. Allosterically activated by GTP. Its function is as follows. Catalyzes the conversion of uracil and 5-phospho-alpha-D-ribose 1-diphosphate (PRPP) to UMP and diphosphate. The sequence is that of Uracil phosphoribosyltransferase from Acholeplasma laidlawii (strain PG-8A).